A 252-amino-acid polypeptide reads, in one-letter code: Triosephosphate isomerase (252 aa).

9 to 11 (NWK) lines the substrate pocket. The active-site Electrophile is histidine 95. Catalysis depends on glutamate 167, which acts as the Proton acceptor. Residues glycine 173, serine 213, and 234–235 (GG) each bind substrate.

This sequence belongs to the triosephosphate isomerase family. Homodimer.

It is found in the cytoplasm. It carries out the reaction D-glyceraldehyde 3-phosphate = dihydroxyacetone phosphate. The protein operates within carbohydrate biosynthesis; gluconeogenesis. Its pathway is carbohydrate degradation; glycolysis; D-glyceraldehyde 3-phosphate from glycerone phosphate: step 1/1. In terms of biological role, involved in the gluconeogenesis. Catalyzes stereospecifically the conversion of dihydroxyacetone phosphate (DHAP) to D-glyceraldehyde-3-phosphate (G3P). The protein is Triosephosphate isomerase of Lactiplantibacillus plantarum (strain ATCC BAA-793 / NCIMB 8826 / WCFS1) (Lactobacillus plantarum).